Consider the following 174-residue polypeptide: Tat proofreading chaperone TtrD (174 aa).

The protein belongs to the TorD/DmsD family. Monomer.

The protein localises to the cytoplasm. Its function is as follows. Binds specifically to the Tat signal peptide of the TtrA subunit of the tetrathionate reductase. This is Tat proofreading chaperone TtrD (ttrD) from Archaeoglobus fulgidus (strain ATCC 49558 / DSM 4304 / JCM 9628 / NBRC 100126 / VC-16).